The sequence spans 142 residues: 3-hydroxyacyl-[acyl-carrier-protein] dehydratase FabZ (142 aa).

H48 is an active-site residue.

Belongs to the thioester dehydratase family. FabZ subfamily.

It localises to the cytoplasm. The catalysed reaction is a (3R)-hydroxyacyl-[ACP] = a (2E)-enoyl-[ACP] + H2O. Involved in unsaturated fatty acids biosynthesis. Catalyzes the dehydration of short chain beta-hydroxyacyl-ACPs and long chain saturated and unsaturated beta-hydroxyacyl-ACPs. The polypeptide is 3-hydroxyacyl-[acyl-carrier-protein] dehydratase FabZ (Prochlorococcus marinus (strain MIT 9313)).